The primary structure comprises 173 residues: Cytochrome c-type biogenesis protein CcmE (173 aa).

Residues 1–8 (MNPRRKSR) lie on the Cytoplasmic side of the membrane. Residues 9–29 (FKLVIFVVLGIAIASGLMLYA) form a helical; Signal-anchor for type II membrane protein membrane-spanning segment. Residues 30–173 (LRQNIDLFYT…RDRQEKEGAK (144 aa)) lie on the Periplasmic side of the membrane. 2 residues coordinate heme: His131 and Tyr135. Positions 152–173 (GIEAADLKGESARDRQEKEGAK) are disordered. The span at 156-173 (ADLKGESARDRQEKEGAK) shows a compositional bias: basic and acidic residues.

It belongs to the CcmE/CycJ family.

It localises to the cell inner membrane. In terms of biological role, heme chaperone required for the biogenesis of c-type cytochromes. Transiently binds heme delivered by CcmC and transfers the heme to apo-cytochromes in a process facilitated by CcmF and CcmH. This is Cytochrome c-type biogenesis protein CcmE from Haemophilus influenzae (strain ATCC 51907 / DSM 11121 / KW20 / Rd).